Reading from the N-terminus, the 181-residue chain is Large ribosomal subunit protein uL22 (181 aa).

The interval 157–181 (PEAAKKPGKKTSAVEKSKKATAATH) is disordered.

It belongs to the universal ribosomal protein uL22 family.

This Biphyllus lunatus (Beetle) protein is Large ribosomal subunit protein uL22 (RpL17).